Here is an 80-residue protein sequence, read N- to C-terminus: Exodeoxyribonuclease 7 small subunit (80 aa).

Belongs to the XseB family. Heterooligomer composed of large and small subunits.

The protein localises to the cytoplasm. The enzyme catalyses Exonucleolytic cleavage in either 5'- to 3'- or 3'- to 5'-direction to yield nucleoside 5'-phosphates.. Functionally, bidirectionally degrades single-stranded DNA into large acid-insoluble oligonucleotides, which are then degraded further into small acid-soluble oligonucleotides. The sequence is that of Exodeoxyribonuclease 7 small subunit from Pseudomonas putida (strain W619).